The following is a 360-amino-acid chain: Phospho-N-acetylmuramoyl-pentapeptide-transferase (360 aa).

Helical transmembrane passes span 18–38 (VFSYVTFRAILGLLTALVFSL), 73–93 (TMGGLLILAGIFVSVLLWGDL), 97–117 (YVLVMLFVLGSFGTIGFIDDY), 134–154 (YILQSLAALVVAVFLYSSSTL), 168–188 (VMPQLGLVFIVLAYFTIVGAS), 199–219 (GLAIMPTVMVAGAFALIAYLS), 236–256 (AGELVIVCTAIVGAGLGFLWF), 263–283 (VFMGDVGSLALGAALGAIAVL), 288–308 (ILLVIMGGVFVMETVSVILQV), and 338–358 (VIVRFWIISLFLVLLGLATLK).

It belongs to the glycosyltransferase 4 family. MraY subfamily. Mg(2+) serves as cofactor.

It localises to the cell inner membrane. The enzyme catalyses UDP-N-acetyl-alpha-D-muramoyl-L-alanyl-gamma-D-glutamyl-meso-2,6-diaminopimeloyl-D-alanyl-D-alanine + di-trans,octa-cis-undecaprenyl phosphate = di-trans,octa-cis-undecaprenyl diphospho-N-acetyl-alpha-D-muramoyl-L-alanyl-D-glutamyl-meso-2,6-diaminopimeloyl-D-alanyl-D-alanine + UMP. Its pathway is cell wall biogenesis; peptidoglycan biosynthesis. Catalyzes the initial step of the lipid cycle reactions in the biosynthesis of the cell wall peptidoglycan: transfers peptidoglycan precursor phospho-MurNAc-pentapeptide from UDP-MurNAc-pentapeptide onto the lipid carrier undecaprenyl phosphate, yielding undecaprenyl-pyrophosphoryl-MurNAc-pentapeptide, known as lipid I. This is Phospho-N-acetylmuramoyl-pentapeptide-transferase from Shewanella denitrificans (strain OS217 / ATCC BAA-1090 / DSM 15013).